The primary structure comprises 486 residues: Protein DETOXIFICATION 27 (486 aa).

The disordered stretch occupies residues 1–25 (MRGGDGEEGSESRVALLKSPHTAEE). Helical transmembrane passes span 41–61 (LWQIVGPAIFSRVTTYSMLVI), 74–94 (LAAISIVNNVTVGFNFGLLLG), 124–144 (IVLFFCCVLLLPTYIFTTPVL), 153–173 (IAELSGVVAIWVIPLHFAFTL), 189–209 (VTAYAAAVALVVHILVCWLFV), 216–236 (VVGTVATISISWWVNVLILLV), 269–289 (GVMLCLENWYYRILIIMTGNL), 299–319 (LSICMAINGWEMMIPLAFFAG), 349–369 (IIGLFFWVLIMLLHNQIAWIF), 384–404 (LLLAFTVLLNSVQPVLSGVAV), 407–427 (GWQSYVAYINLGCYYCIGVPL), and 439–461 (VMGIWGGMIFGGTAVQTMILSFI).

The protein belongs to the multi antimicrobial extrusion (MATE) (TC 2.A.66.1) family.

It is found in the membrane. In Arabidopsis thaliana (Mouse-ear cress), this protein is Protein DETOXIFICATION 27.